The chain runs to 302 residues: Acetylglutamate kinase (302 aa).

Substrate contacts are provided by residues 55 to 56, R77, and N176; that span reads GG.

It belongs to the acetylglutamate kinase family. ArgB subfamily.

Its subcellular location is the cytoplasm. It catalyses the reaction N-acetyl-L-glutamate + ATP = N-acetyl-L-glutamyl 5-phosphate + ADP. The protein operates within amino-acid biosynthesis; L-arginine biosynthesis; N(2)-acetyl-L-ornithine from L-glutamate: step 2/4. Its function is as follows. Catalyzes the ATP-dependent phosphorylation of N-acetyl-L-glutamate. The sequence is that of Acetylglutamate kinase from Corynebacterium efficiens (strain DSM 44549 / YS-314 / AJ 12310 / JCM 11189 / NBRC 100395).